Reading from the N-terminus, the 413-residue chain is Multifunctional CCA protein (413 aa).

Positions 8 and 11 each coordinate ATP. Residues G8 and R11 each coordinate CTP. 2 residues coordinate Mg(2+): D21 and D23. Positions 91, 143, and 146 each coordinate ATP. R91, R143, and R146 together coordinate CTP. Residues 232–333 enclose the HD domain; it reads TGVHVMMVVD…VRLFERSDAL (102 aa).

This sequence belongs to the tRNA nucleotidyltransferase/poly(A) polymerase family. Bacterial CCA-adding enzyme type 1 subfamily. Monomer. Can also form homodimers and oligomers. The cofactor is Mg(2+). It depends on Ni(2+) as a cofactor.

It carries out the reaction a tRNA precursor + 2 CTP + ATP = a tRNA with a 3' CCA end + 3 diphosphate. It catalyses the reaction a tRNA with a 3' CCA end + 2 CTP + ATP = a tRNA with a 3' CCACCA end + 3 diphosphate. Functionally, catalyzes the addition and repair of the essential 3'-terminal CCA sequence in tRNAs without using a nucleic acid template. Adds these three nucleotides in the order of C, C, and A to the tRNA nucleotide-73, using CTP and ATP as substrates and producing inorganic pyrophosphate. tRNA 3'-terminal CCA addition is required both for tRNA processing and repair. Also involved in tRNA surveillance by mediating tandem CCA addition to generate a CCACCA at the 3' terminus of unstable tRNAs. While stable tRNAs receive only 3'-terminal CCA, unstable tRNAs are marked with CCACCA and rapidly degraded. This is Multifunctional CCA protein from Burkholderia cenocepacia (strain ATCC BAA-245 / DSM 16553 / LMG 16656 / NCTC 13227 / J2315 / CF5610) (Burkholderia cepacia (strain J2315)).